Consider the following 471-residue polypeptide: MATFPPLPMTHTRLAILARQKLPCSSKKIPRAQLIKEKEDIDYYLEQNFKGLSKEEVAAHRNSYKKSICVDMLRDGFHKSFTELFALMEQWDKLPEAAKAQSLFWQQRPLEDQPDKLDNFYHYLTRAEAAERKGYYEEVYNNLYALACYFDNSEDKWVRNHFYERCFNIAQLIKADGGKKEAEAESHMGLLFEEEGELLKAAEHYEAFHELTHGRLWKDGTGQLLNLVACESLVRTYRLLSDRMLENKDYKQAIKILIKASEIAREGNDRSMEGEASYYLGLAHLASGEYETALTVLNRYSEISTSLDDDHGLGRAYEAIAKALQSQGETTEAINYLEKFVTIARNNLQSLDMIRACTMLGDIYNEKGQYSKASEYFQQAFSTAMELMKTALMDETKVHYGIARAHQMMLAMKGYIESADSNGLNCLLSWKETRTQIEYDPILGESRRATEDNIYQLPDAEEETRRSPENQ.

TPR repeat units lie at residues aspartate 92–glutamate 131, tyrosine 136–isoleucine 173, alanine 182–arginine 215, valine 234–glycine 267, glycine 274–leucine 307, glycine 314–asparagine 347, and isoleucine 354–leucine 387. The interval alanine 449–glutamine 471 is disordered.

Expressed in spermatozoa (at protein level).

It is found in the cytoplasm. The protein resides in the cytoskeleton. Its subcellular location is the flagellum axoneme. Axonemal protein which is implicated in axonemal and/or peri-axonemal structure assembly and regulates flagellum assembly and beating and therefore sperm motility. In Mus musculus (Mouse), this protein is Tetratricopeptide repeat protein 29 (Ttc29).